A 193-amino-acid polypeptide reads, in one-letter code: Ancillary SecYEG translocon subunit (193 aa).

The Cytoplasmic segment spans residues 1-8 (MLNISKKN). Residues 9–29 (IIFFILFFLIISLILFNWKYF) form a helical membrane-spanning segment. Residues 30–193 (SLVNKENLES…MKLNELKEQN (164 aa)) lie on the Periplasmic side of the membrane.

The protein belongs to the YfgM family. As to quaternary structure, interacts with the SecYEG translocon. Forms a complex with PpiD.

It is found in the cell inner membrane. Functionally, may mediate protein transfer from the SecYEG translocon to the periplasmic chaperone network via its periplasmic C-terminal region. The chain is Ancillary SecYEG translocon subunit from Buchnera aphidicola subsp. Acyrthosiphon pisum (strain APS) (Acyrthosiphon pisum symbiotic bacterium).